We begin with the raw amino-acid sequence, 157 residues long: MEYSIRQEQQRVVAGFHMVGPWEQTVKQGFEQLMMWVDGRDIPAKEWLAVYYDNPDEVPAEKLRCDTVVTVEPGFQIPANSEGVMLTQVSGGEYAVASARVVNHDFATPWYQFFGSVLADTAWEMAAKPCFERYLNDGNQDGYWDIEMYIAVSRRAG.

The protein belongs to the DNA gyrase inhibitor family. In terms of assembly, interacts with DNA gyrase.

It localises to the cytoplasm. Inhibits the supercoiling activity of DNA gyrase. Acts by inhibiting DNA gyrase at an early step, prior to (or at the step of) binding of DNA by the gyrase. It protects cells against toxins that target DNA gyrase, by inhibiting activity of these toxins and reducing the formation of lethal double-strand breaks in the cell. This chain is DNA gyrase inhibitor, found in Enterobacter lignolyticus (strain SCF1).